The primary structure comprises 468 residues: UDP-N-acetylmuramate--L-alanine ligase (468 aa).

121–127 (GSHGKTT) contributes to the ATP binding site.

It belongs to the MurCDEF family.

The protein resides in the cytoplasm. The catalysed reaction is UDP-N-acetyl-alpha-D-muramate + L-alanine + ATP = UDP-N-acetyl-alpha-D-muramoyl-L-alanine + ADP + phosphate + H(+). It functions in the pathway cell wall biogenesis; peptidoglycan biosynthesis. In terms of biological role, cell wall formation. The chain is UDP-N-acetylmuramate--L-alanine ligase from Borreliella burgdorferi (strain ATCC 35210 / DSM 4680 / CIP 102532 / B31) (Borrelia burgdorferi).